We begin with the raw amino-acid sequence, 394 residues long: Protein TsgA homolog (394 aa).

12 consecutive transmembrane segments (helical) span residues tryptophan 11–methionine 31, phenylalanine 51–proline 71, leucine 76–leucine 96, leucine 101–isoleucine 121, leucine 134–methionine 154, tryptophan 162–phenylalanine 182, isoleucine 206–isoleucine 226, phenylalanine 251–leucine 271, isoleucine 274–asparagine 294, isoleucine 302–leucine 322, phenylalanine 334–valine 354, and leucine 363–valine 383.

It belongs to the major facilitator superfamily. TsgA family.

The protein resides in the cell inner membrane. This Serratia proteamaculans (strain 568) protein is Protein TsgA homolog.